Consider the following 408-residue polypeptide: Aminoacylase-1A (408 aa).

Residue His-80 coordinates Zn(2+). Asp-82 is an active-site residue. Asp-113 provides a ligand contact to Zn(2+). The active-site Proton acceptor is Glu-147. The Zn(2+) site is built by Glu-148, Glu-175, and His-373. At Ser-408 the chain carries Phosphoserine.

It belongs to the peptidase M20A family. In terms of assembly, homodimer. It depends on Zn(2+) as a cofactor. Post-translationally, the N-terminus is blocked.

The protein localises to the cytoplasm. The catalysed reaction is an N-acyl-L-amino acid + H2O = an L-alpha-amino acid + a carboxylate. It catalyses the reaction an N-acetyl-L-cysteine-S-conjugate + H2O = an S-substituted L-cysteine + acetate. Functionally, involved in the hydrolysis of N-acylated or N-acetylated amino acids (except L-aspartate). The polypeptide is Aminoacylase-1A (Acy1a) (Rattus norvegicus (Rat)).